The chain runs to 557 residues: DNA ligase (557 aa).

Glutamate 251 contributes to the ATP binding site. Lysine 253 functions as the N6-AMP-lysine intermediate in the catalytic mechanism. ATP contacts are provided by arginine 258, arginine 273, glutamate 303, phenylalanine 342, arginine 418, and lysine 424.

Belongs to the ATP-dependent DNA ligase family. The cofactor is Mg(2+).

It carries out the reaction ATP + (deoxyribonucleotide)n-3'-hydroxyl + 5'-phospho-(deoxyribonucleotide)m = (deoxyribonucleotide)n+m + AMP + diphosphate.. DNA ligase that seals nicks in double-stranded DNA during DNA replication, DNA recombination and DNA repair. This chain is DNA ligase, found in Methanosphaera stadtmanae (strain ATCC 43021 / DSM 3091 / JCM 11832 / MCB-3).